Consider the following 151-residue polypeptide: SsrA-binding protein (151 aa).

This sequence belongs to the SmpB family.

The protein localises to the cytoplasm. In terms of biological role, required for rescue of stalled ribosomes mediated by trans-translation. Binds to transfer-messenger RNA (tmRNA), required for stable association of tmRNA with ribosomes. tmRNA and SmpB together mimic tRNA shape, replacing the anticodon stem-loop with SmpB. tmRNA is encoded by the ssrA gene; the 2 termini fold to resemble tRNA(Ala) and it encodes a 'tag peptide', a short internal open reading frame. During trans-translation Ala-aminoacylated tmRNA acts like a tRNA, entering the A-site of stalled ribosomes, displacing the stalled mRNA. The ribosome then switches to translate the ORF on the tmRNA; the nascent peptide is terminated with the 'tag peptide' encoded by the tmRNA and targeted for degradation. The ribosome is freed to recommence translation, which seems to be the essential function of trans-translation. This chain is SsrA-binding protein, found in Geotalea uraniireducens (strain Rf4) (Geobacter uraniireducens).